Here is a 574-residue protein sequence, read N- to C-terminus: Glutamyl-tRNA(Gln) amidotransferase subunit B, mitochondrial (574 aa).

The transit peptide at 1 to 12 directs the protein to the mitochondrion; the sequence is MIRQFVSHRGIP. The tract at residues 34-62 is disordered; sequence PLGRKNWSTSDEAKSKRAAMRKGGAPPPE.

This sequence belongs to the GatB/GatE family. GatB subfamily. In terms of assembly, subunit of the heterotrimeric GatCAB amidotransferase (AdT) complex, composed of A, B and C subunits.

The protein resides in the mitochondrion. The catalysed reaction is L-glutamyl-tRNA(Gln) + L-glutamine + ATP + H2O = L-glutaminyl-tRNA(Gln) + L-glutamate + ADP + phosphate + H(+). Allows the formation of correctly charged Gln-tRNA(Gln) through the transamidation of misacylated Glu-tRNA(Gln) in the mitochondria. The reaction takes place in the presence of glutamine and ATP through an activated gamma-phospho-Glu-tRNA(Gln). The sequence is that of Glutamyl-tRNA(Gln) amidotransferase subunit B, mitochondrial from Ajellomyces capsulatus (strain H143) (Darling's disease fungus).